We begin with the raw amino-acid sequence, 218 residues long: Hypoxanthine-guanine phosphoribosyltransferase (218 aa).

GMP-binding positions include Lys69, 134–142 (EDIIDTGKT), Lys166, 186–188 (KFV), and Asp194. Residue Asp138 is the Proton acceptor of the active site. Residue Asp194 coordinates Mg(2+).

Belongs to the purine/pyrimidine phosphoribosyltransferase family. Homotetramer. It depends on Mg(2+) as a cofactor.

The protein localises to the cytoplasm. It carries out the reaction IMP + diphosphate = hypoxanthine + 5-phospho-alpha-D-ribose 1-diphosphate. The enzyme catalyses GMP + diphosphate = guanine + 5-phospho-alpha-D-ribose 1-diphosphate. It functions in the pathway purine metabolism; IMP biosynthesis via salvage pathway; IMP from hypoxanthine: step 1/1. In terms of biological role, converts guanine to guanosine monophosphate, and hypoxanthine to inosine monophosphate. Transfers the 5-phosphoribosyl group from 5-phosphoribosylpyrophosphate onto the purine. Plays a central role in the generation of purine nucleotides through the purine salvage pathway. The chain is Hypoxanthine-guanine phosphoribosyltransferase (HPRT1) from Gallus gallus (Chicken).